A 1530-amino-acid polypeptide reads, in one-letter code: Regulating synaptic membrane exocytosis protein 2 (1530 aa).

Residues 1-34 (MSAPLGPRGRPAPTPAASQPPPQPEMPDLSHLTE) are disordered. The segment covering 10-25 (RPAPTPAASQPPPQPE) has biased composition (pro residues). Residues 26 to 194 (MPDLSHLTEE…TKSGAWFYNS (169 aa)) enclose the RabBD domain. The FYVE-type zinc finger occupies 126 to 182 (KGDAPTCGICHKTKFADGCGHNCSYCQTKFCARCGGRVSLRSNKVMWVCNLCRKQQE). Zn(2+) is bound by residues Cys132, Cys135, Cys148, Cys151, Cys156, Cys159, Cys174, and Cys177. 2 disordered regions span residues 195–608 (GSNT…ERQK) and 632–655 (SGVD…HPVT). Basic and acidic residues-rich tracts occupy residues 210–225 (LRNE…KLHE), 327–338 (EPGHLNYRDSNR), 357–375 (RDEY…RYRS), 391–410 (EQMR…RHSD), and 419–443 (EDSR…RRAA). Residue Ser409 is modified to Phosphoserine. Over residues 458–472 (AQGQSSYPQRTSNHS) the composition is skewed to polar residues. Positions 484 to 501 (DRPDMRRADSLRKQHHLD) are enriched in basic and acidic residues. A compositionally biased stretch (polar residues) spans 519-530 (RNDSLSSDQSES). Residues 537 to 546 (RPHKSKKGGK) show a composition bias toward basic residues. The segment covering 567–577 (SCDDVELESES) has biased composition (acidic residues). 2 stretches are compositionally biased toward basic and acidic residues: residues 578 to 592 (VSEK…RKTS) and 643 to 653 (NEEHSHSDKHP). One can recognise a PDZ domain in the interval 677 to 763 (DGSVPRDSGA…EPQVELVVSR (87 aa)). A Phosphothreonine modification is found at Thr698. The disordered stretch occupies residues 771–802 (IPDSTHAQLESSSSSFESQKMDRPSISVTSPM). A phosphoserine mark is found at Ser800 and Ser803. The region spanning 814-937 (LSGQLSIKLW…ALLDDEPHWY (124 aa)) is the C2 1 domain. 6 disordered regions span residues 948 to 982 (PLPR…SEVS), 1003 to 1122 (LQSS…ERSA), 1130 to 1149 (RQMK…RLEQ), 1154 to 1187 (KYRS…SRTS), 1242 to 1263 (SLEK…TSGK), and 1282 to 1307 (KSRS…QRST). The segment covering 1003–1024 (LQSSTLSVPEQVMSSNHCSPSG) has biased composition (polar residues). Positions 1067 to 1086 (RMDRHRVMDDHYSSDRDRSH) are enriched in basic and acidic residues. Residues 1088-1101 (RTGSVQTSPSSTPG) are compositionally biased toward polar residues. Ser1095 carries the post-translational modification Phosphoserine. Residues 1154-1165 (KYRSGWDPHRGA) are compositionally biased toward basic and acidic residues. The residue at position 1175 (Ser1175) is a Phosphoserine. Residues 1178 to 1187 (SDVSAVSRTS) are compositionally biased toward low complexity. A Phosphoserine modification is found at Ser1251. One can recognise a C2 2 domain in the interval 1376-1494 (AMGDIQVGMM…ELSNMVIGWF (119 aa)). Ser1515 and Ser1518 each carry phosphoserine.

Interacts with TSPOAP1 and RIMBP2. Interacts with PPFIA3 and PPFIA4. Interacts via its zinc finger with the first C2 domain of UNC13A. Forms a complex consisting of UNC13A, RIMS2 and RAB3A. Heterodimer with PCLO. Part of a ternary complex involving PCLO and EPAC2. Interacts with RAB3A and RAB3B that have been activated by GTP-binding. Interacts with RAB3C, RAB3D and RAB26. Detected in testis, pituitary and an insulinoma cell line. Detected at low levels in cerebellar cortex.

It localises to the synapse. Its subcellular location is the synaptosome. Rab effector involved in exocytosis. May act as scaffold protein. Plays a role in dendrite formation by melanocytes. This chain is Regulating synaptic membrane exocytosis protein 2 (Rims2), found in Mus musculus (Mouse).